A 446-amino-acid polypeptide reads, in one-letter code: Glutamyl-tRNA(Gln) amidotransferase subunit D (446 aa).

Residues 90–421 (SEVMIISTGG…DRIKEIMLTN (332 aa)) form the Asparaginase/glutaminase domain. Catalysis depends on residues threonine 100, threonine 176, aspartate 177, and lysine 255.

It belongs to the asparaginase 1 family. GatD subfamily. Heterodimer of GatD and GatE.

The enzyme catalyses L-glutamyl-tRNA(Gln) + L-glutamine + ATP + H2O = L-glutaminyl-tRNA(Gln) + L-glutamate + ADP + phosphate + H(+). Allows the formation of correctly charged Gln-tRNA(Gln) through the transamidation of misacylated Glu-tRNA(Gln) in organisms which lack glutaminyl-tRNA synthetase. The reaction takes place in the presence of glutamine and ATP through an activated gamma-phospho-Glu-tRNA(Gln). The GatDE system is specific for glutamate and does not act on aspartate. This Sulfolobus acidocaldarius (strain ATCC 33909 / DSM 639 / JCM 8929 / NBRC 15157 / NCIMB 11770) protein is Glutamyl-tRNA(Gln) amidotransferase subunit D.